A 386-amino-acid polypeptide reads, in one-letter code: Succinate--CoA ligase [ADP-forming] subunit beta (386 aa).

Residues 9-244 enclose the ATP-grasp domain; it reads KELLKQFGVT…LDEEDPAEIE (236 aa). Residues lysine 46, 53–55, glutamate 99, alanine 102, and glutamate 107 contribute to the ATP site; that span reads GRG. Mg(2+) contacts are provided by asparagine 199 and aspartate 213. Residues asparagine 264 and 321–323 each bind substrate; that span reads GIM.

It belongs to the succinate/malate CoA ligase beta subunit family. In terms of assembly, heterotetramer of two alpha and two beta subunits. Mg(2+) is required as a cofactor.

It carries out the reaction succinate + ATP + CoA = succinyl-CoA + ADP + phosphate. It catalyses the reaction GTP + succinate + CoA = succinyl-CoA + GDP + phosphate. The protein operates within carbohydrate metabolism; tricarboxylic acid cycle; succinate from succinyl-CoA (ligase route): step 1/1. In terms of biological role, succinyl-CoA synthetase functions in the citric acid cycle (TCA), coupling the hydrolysis of succinyl-CoA to the synthesis of either ATP or GTP and thus represents the only step of substrate-level phosphorylation in the TCA. The beta subunit provides nucleotide specificity of the enzyme and binds the substrate succinate, while the binding sites for coenzyme A and phosphate are found in the alpha subunit. The polypeptide is Succinate--CoA ligase [ADP-forming] subunit beta (Bordetella pertussis (strain Tohama I / ATCC BAA-589 / NCTC 13251)).